A 149-amino-acid polypeptide reads, in one-letter code: Pleckstrin homology domain-containing family J member 1 (149 aa).

In terms of domain architecture, PH spans 15 to 108 (PAEMAAELGM…WMAALRQASY (94 aa)).

This is Pleckstrin homology domain-containing family J member 1 (PLEKHJ1) from Bos taurus (Bovine).